A 421-amino-acid polypeptide reads, in one-letter code: MDKLRITGGARLHGEVVISGAKNSALPILCASLLTADPVRLSNVPQLNDTRTMLRLLGQMGVKAESAQTSVNLQADQVHSLEAPYELVKTMRASILVLGPLLARFGEARVSLPGGCTIGQRPVDQHIKGLEALGAQITMEHGFVVARAKRLKGASVRTDMVTVTGTENLLMAATLAEGQTILENAAREPEVIDLAELLIKMGARIQGHGTDRIVIDGVERLHGADHTVISDRIEAGTFLCAVGATGGDITLRNTDAAIMGATLDKLTEAGLHIESGPGWIRGVMNGRPKPVGIRTHEYPGFATDMQAQLMALNTIADGTAIVVENIFENRFMHVQELCRLGADIDIDGHTAVVRGVARLSGATVMATDLRASASLVIAGLAAEGDTLIDRIYHLDRGYDRMEIKLRNLGARIERVTGKEDE.

Phosphoenolpyruvate is bound at residue 22–23 (KN). UDP-N-acetyl-alpha-D-glucosamine is bound at residue R92. The Proton donor role is filled by C116. C116 is modified (2-(S-cysteinyl)pyruvic acid O-phosphothioketal). Residues 121 to 125 (RPVDQ), D304, and I326 contribute to the UDP-N-acetyl-alpha-D-glucosamine site.

This sequence belongs to the EPSP synthase family. MurA subfamily.

Its subcellular location is the cytoplasm. The enzyme catalyses phosphoenolpyruvate + UDP-N-acetyl-alpha-D-glucosamine = UDP-N-acetyl-3-O-(1-carboxyvinyl)-alpha-D-glucosamine + phosphate. It functions in the pathway cell wall biogenesis; peptidoglycan biosynthesis. Functionally, cell wall formation. Adds enolpyruvyl to UDP-N-acetylglucosamine. The sequence is that of UDP-N-acetylglucosamine 1-carboxyvinyltransferase from Bordetella avium (strain 197N).